The chain runs to 313 residues: Probable pyridoxal 5'-phosphate synthase subunit PDX1.2 (313 aa).

Residue D42 participates in D-ribose 5-phosphate binding. K99 acts as the Schiff-base intermediate with D-ribose 5-phosphate in catalysis. D-ribose 5-phosphate is bound at residue G171. R183 is a binding site for D-glyceraldehyde 3-phosphate. D-ribose 5-phosphate-binding positions include G232 and 253-254; that span reads GS.

Belongs to the PdxS/SNZ family.

The enzyme catalyses aldehydo-D-ribose 5-phosphate + D-glyceraldehyde 3-phosphate + L-glutamine = pyridoxal 5'-phosphate + L-glutamate + phosphate + 3 H2O + H(+). It functions in the pathway cofactor biosynthesis; pyridoxal 5'-phosphate biosynthesis. Functionally, catalyzes the formation of pyridoxal 5'-phosphate from ribose 5-phosphate (RBP), glyceraldehyde 3-phosphate (G3P) and ammonia. The ammonia is provided by PDX2. Can also use ribulose 5-phosphate and dihydroxyacetone phosphate as substrates, resulting from enzyme-catalyzed isomerization of RBP and G3P, respectively. Also plays an indirect role in resistance to singlet oxygen-generating photosensitizers. This chain is Probable pyridoxal 5'-phosphate synthase subunit PDX1.2 (PDX12), found in Oryza sativa subsp. japonica (Rice).